A 218-amino-acid chain; its full sequence is Glutathione S-transferase class-mu 26 kDa isozyme (218 aa).

In terms of domain architecture, GST N-terminal spans 1–83 (MAPKFGYWKV…YIADKHNMLG (83 aa)). Residues 7 to 8 (YW), 41 to 45 (WSNDK), 54 to 55 (NL), and 67 to 68 (QS) contribute to the glutathione site. Residues 85–203 (CPKERAEISM…NSSRYIKWPL (119 aa)) form the GST C-terminal domain. Substrate is bound at residue Y111.

Belongs to the GST superfamily. Mu family. As to quaternary structure, homodimer. In terms of tissue distribution, tegument and in subtegumentary parenchymal cells. GST 26 may be actively excreted by adult worms.

It carries out the reaction RX + glutathione = an S-substituted glutathione + a halide anion + H(+). Functionally, conjugation of reduced glutathione to a wide number of exogenous and endogenous hydrophobic electrophiles. In terms of biological role, GST isoenzymes appear to play a central role in the parasite detoxification system. Other functions are also suspected including a role in increasing the solubility of haematin in the parasite gut. The polypeptide is Glutathione S-transferase class-mu 26 kDa isozyme (Schistosoma mansoni (Blood fluke)).